The sequence spans 212 residues: Thymidylate kinase (212 aa).

10–17 (GLEGAGKT) lines the ATP pocket.

It belongs to the thymidylate kinase family.

The enzyme catalyses dTMP + ATP = dTDP + ADP. Functionally, phosphorylation of dTMP to form dTDP in both de novo and salvage pathways of dTTP synthesis. In Serratia proteamaculans (strain 568), this protein is Thymidylate kinase.